A 220-amino-acid chain; its full sequence is Protein-methionine-sulfoxide reductase heme-binding subunit MsrQ (220 aa).

Helical transmembrane passes span 20-40 (LWLL…LGAT), 51-71 (FEHL…LVTP), 86-106 (ALGL…MVLD), 122-142 (PFIT…LTSN), 153-173 (WSSL…HFLM), and 175-195 (VKSW…LLLW).

It belongs to the MsrQ family. Heterodimer of a catalytic subunit (MsrP) and a heme-binding subunit (MsrQ). Requires FMN as cofactor. It depends on heme b as a cofactor.

Its subcellular location is the cell inner membrane. Part of the MsrPQ system that repairs oxidized periplasmic proteins containing methionine sulfoxide residues (Met-O), using respiratory chain electrons. Thus protects these proteins from oxidative-stress damage caused by reactive species of oxygen and chlorine generated by the host defense mechanisms. MsrPQ is essential for the maintenance of envelope integrity under bleach stress, rescuing a wide series of structurally unrelated periplasmic proteins from methionine oxidation. MsrQ provides electrons for reduction to the reductase catalytic subunit MsrP, using the quinone pool of the respiratory chain. The polypeptide is Protein-methionine-sulfoxide reductase heme-binding subunit MsrQ (Brucella melitensis biotype 2 (strain ATCC 23457)).